We begin with the raw amino-acid sequence, 91 residues long: MPNIKSAIKRTKTIEKRRAHRASQKSDLRTSIKNFEKAVAASDVALAKSTLLVAVKKLDKAASKGLIHKNAANRQKSRLMKKLNVLSAPVA.

The interval 1 to 28 (MPNIKSAIKRTKTIEKRRAHRASQKSDL) is disordered. Positions 7–23 (AIKRTKTIEKRRAHRAS) are enriched in basic residues.

This sequence belongs to the bacterial ribosomal protein bS20 family.

Functionally, binds directly to 16S ribosomal RNA. The protein is Small ribosomal subunit protein bS20 of Brevibacillus brevis (strain 47 / JCM 6285 / NBRC 100599).